The following is a 410-amino-acid chain: Multifunctional CCA protein (410 aa).

Residues glycine 8 and arginine 11 each contribute to the ATP site. CTP-binding residues include glycine 8 and arginine 11. 2 residues coordinate Mg(2+): aspartate 21 and aspartate 23. Residues arginine 91, arginine 137, and arginine 140 each contribute to the ATP site. Positions 91, 137, and 140 each coordinate CTP. An HD domain is found at 228-329 (TGVHVLSVLQ…LELLQSFDVY (102 aa)).

Belongs to the tRNA nucleotidyltransferase/poly(A) polymerase family. Bacterial CCA-adding enzyme type 1 subfamily. Monomer. Can also form homodimers and oligomers. Mg(2+) is required as a cofactor. It depends on Ni(2+) as a cofactor.

The catalysed reaction is a tRNA precursor + 2 CTP + ATP = a tRNA with a 3' CCA end + 3 diphosphate. It carries out the reaction a tRNA with a 3' CCA end + 2 CTP + ATP = a tRNA with a 3' CCACCA end + 3 diphosphate. Functionally, catalyzes the addition and repair of the essential 3'-terminal CCA sequence in tRNAs without using a nucleic acid template. Adds these three nucleotides in the order of C, C, and A to the tRNA nucleotide-73, using CTP and ATP as substrates and producing inorganic pyrophosphate. tRNA 3'-terminal CCA addition is required both for tRNA processing and repair. Also involved in tRNA surveillance by mediating tandem CCA addition to generate a CCACCA at the 3' terminus of unstable tRNAs. While stable tRNAs receive only 3'-terminal CCA, unstable tRNAs are marked with CCACCA and rapidly degraded. In Pseudomonas aeruginosa (strain ATCC 15692 / DSM 22644 / CIP 104116 / JCM 14847 / LMG 12228 / 1C / PRS 101 / PAO1), this protein is Multifunctional CCA protein.